The following is a 501-amino-acid chain: UPF0616 protein C1687.04 (501 aa).

It belongs to the UPF0616 family.

Its subcellular location is the cytoplasm. The protein resides in the nucleus. This Schizosaccharomyces pombe (strain 972 / ATCC 24843) (Fission yeast) protein is UPF0616 protein C1687.04.